Reading from the N-terminus, the 579-residue chain is V-type ATP synthase alpha chain (579 aa).

227-234 (GGFGTGKT) provides a ligand contact to ATP.

The protein belongs to the ATPase alpha/beta chains family.

The catalysed reaction is ATP + H2O + 4 H(+)(in) = ADP + phosphate + 5 H(+)(out). Produces ATP from ADP in the presence of a proton gradient across the membrane. The V-type alpha chain is a catalytic subunit. The protein is V-type ATP synthase alpha chain of Anaeromyxobacter sp. (strain K).